Reading from the N-terminus, the 180-residue chain is ATP-dependent protease subunit HslV (180 aa).

Thr7 is an active-site residue. Na(+) is bound by residues Gly165, Cys168, and Thr171.

The protein belongs to the peptidase T1B family. HslV subfamily. As to quaternary structure, a double ring-shaped homohexamer of HslV is capped on each side by a ring-shaped HslU homohexamer. The assembly of the HslU/HslV complex is dependent on binding of ATP.

Its subcellular location is the cytoplasm. It catalyses the reaction ATP-dependent cleavage of peptide bonds with broad specificity.. Allosterically activated by HslU binding. Protease subunit of a proteasome-like degradation complex believed to be a general protein degrading machinery. The protein is ATP-dependent protease subunit HslV of Bacillus cereus (strain G9842).